The chain runs to 124 residues: S-adenosylmethionine decarboxylase proenzyme (124 aa).

Serine 71 functions as the Schiff-base intermediate with substrate; via pyruvic acid in the catalytic mechanism. Serine 71 is subject to Pyruvic acid (Ser); by autocatalysis. Histidine 76 acts as the Proton acceptor; for processing activity in catalysis. Cysteine 91 acts as the Proton donor; for catalytic activity in catalysis.

The protein belongs to the prokaryotic AdoMetDC family. Type 1 subfamily. Heterotetramer of two alpha and two beta chains arranged as a dimer of alpha/beta heterodimers. Pyruvate serves as cofactor. Post-translationally, is synthesized initially as an inactive proenzyme. Formation of the active enzyme involves a self-maturation process in which the active site pyruvoyl group is generated from an internal serine residue via an autocatalytic post-translational modification. Two non-identical subunits are generated from the proenzyme in this reaction, and the pyruvate is formed at the N-terminus of the alpha chain, which is derived from the carboxyl end of the proenzyme. The post-translation cleavage follows an unusual pathway, termed non-hydrolytic serinolysis, in which the side chain hydroxyl group of the serine supplies its oxygen atom to form the C-terminus of the beta chain, while the remainder of the serine residue undergoes an oxidative deamination to produce ammonia and the pyruvoyl group blocking the N-terminus of the alpha chain.

It carries out the reaction S-adenosyl-L-methionine + H(+) = S-adenosyl 3-(methylsulfanyl)propylamine + CO2. It participates in amine and polyamine biosynthesis; S-adenosylmethioninamine biosynthesis; S-adenosylmethioninamine from S-adenosyl-L-methionine: step 1/1. Its activity is regulated as follows. Competitively inhibited by methylglyoxal bis-guanylhydrazone. Irreversibly inhibited by NaBH(4) in vitro. Functionally, catalyzes the decarboxylation of S-adenosylmethionine to S-adenosylmethioninamine (dcAdoMet), the propylamine donor required for the synthesis of the polyamines spermine and spermidine from the diamine putrescine. Has no arginine decarboxylase (ArgDC) activity. The chain is S-adenosylmethionine decarboxylase proenzyme (speH) from Saccharolobus solfataricus (strain ATCC 35092 / DSM 1617 / JCM 11322 / P2) (Sulfolobus solfataricus).